Consider the following 159-residue polypeptide: Transmembrane protein 42 (159 aa).

Transmembrane regions (helical) follow at residues 37–57 (FWGV…AASA), 59–79 (LAFG…VMAS), 100–120 (IASV…GYVL), and 124–144 (CQEV…TLIH).

It localises to the membrane. The protein is Transmembrane protein 42 (TMEM42) of Homo sapiens (Human).